The primary structure comprises 975 residues: Translation initiation factor IF-2 (975 aa).

Residues 48-63 (DHLRKSHGATDGDKRK) are compositionally biased toward basic and acidic residues. Disordered stretches follow at residues 48–84 (DHLR…GKAR) and 96–388 (FVKR…QAPT). Residues 104–115 (ETGADQAQAQTD) are compositionally biased toward low complexity. The span at 120–177 (AELKRREEEARREAELLEKQAQELRERQERLEREEAERRAREEAAEAERRRAEEEAAA) shows a compositional bias: basic and acidic residues. Residues 178-211 (KRAAAAQAEAAQQAAAAREQAQRAQSEPAEQSAQ) show a composition bias toward low complexity. Residues 212–263 (DEARAAAERAAQREAAKKAEDAAREAADKARAEQEEIRKRREAAEAEARAIR) show a composition bias toward basic and acidic residues. Low complexity predominate over residues 302–330 (KPAGEAAAARPAAKKPASGAPAPAAAPAG). The segment covering 359-372 (SSGGVDRGWRGGPK) has biased composition (gly residues). A tr-type G domain is found at 475 to 644 (PRPPVVTVMG…LLQAEVLELK (170 aa)). The G1 stretch occupies residues 484-491 (GHVDHGKT). 484 to 491 (GHVDHGKT) is a GTP binding site. The segment at 509–513 (GITQH) is G2. Residues 530-533 (DTPG) form a G3 region. GTP is bound by residues 530 to 534 (DTPGH) and 584 to 587 (NKID). The G4 stretch occupies residues 584–587 (NKID). The interval 620–622 (SAK) is G5.

It belongs to the TRAFAC class translation factor GTPase superfamily. Classic translation factor GTPase family. IF-2 subfamily.

It localises to the cytoplasm. Its function is as follows. One of the essential components for the initiation of protein synthesis. Protects formylmethionyl-tRNA from spontaneous hydrolysis and promotes its binding to the 30S ribosomal subunits. Also involved in the hydrolysis of GTP during the formation of the 70S ribosomal complex. In Burkholderia pseudomallei (strain 1710b), this protein is Translation initiation factor IF-2.